The following is a 434-amino-acid chain: Chaperone SurA (434 aa).

The first 22 residues, 1 to 22 (MKPSKHLIFALFALAISQPTMA), serve as a signal peptide directing secretion. 2 consecutive PpiC domains span residues 173–274 (DVEY…KIMD) and 283–383 (IEEV…QLEE).

The protein localises to the periplasm. It catalyses the reaction [protein]-peptidylproline (omega=180) = [protein]-peptidylproline (omega=0). Its function is as follows. Chaperone involved in the correct folding and assembly of outer membrane proteins. Recognizes specific patterns of aromatic residues and the orientation of their side chains, which are found more frequently in integral outer membrane proteins. May act in both early periplasmic and late outer membrane-associated steps of protein maturation. This Shewanella sp. (strain MR-7) protein is Chaperone SurA.